Here is a 652-residue protein sequence, read N- to C-terminus: Ethylmalonyl-CoA mutase (652 aa).

Residues 519–647 (PLKFVVGKPG…MDIVGLVDRT (129 aa)) form the B12-binding domain. Residue histidine 532 participates in adenosylcob(III)alamin binding.

The protein belongs to the methylmalonyl-CoA mutase family. As to quaternary structure, homodimer. Adenosylcob(III)alamin is required as a cofactor.

The enzyme catalyses (2R)-ethylmalonyl-CoA = (2S)-methylsuccinyl-CoA. Its function is as follows. Radical enzyme that catalyzes the transformation of (2R)-ethylmalonyl-CoA to (2S)-methylsuccinyl-CoA. Is involved in the ethylmalonyl-CoA pathway for acetyl-CoA assimilation required for R.sphaeroides growth on acetate as sole carbon source. Is highly specific for its substrate, ethylmalonyl-CoA, and accepts methylmalonyl-CoA only at 0.2% relative activity. This Cereibacter sphaeroides (strain ATCC 17023 / DSM 158 / JCM 6121 / CCUG 31486 / LMG 2827 / NBRC 12203 / NCIMB 8253 / ATH 2.4.1.) (Rhodobacter sphaeroides) protein is Ethylmalonyl-CoA mutase.